Reading from the N-terminus, the 635-residue chain is Ligand-gated ion channel 4 (635 aa).

Positions Met1–Ala24 are cleaved as a signal peptide. Residues Gly25–Tyr324 are Extracellular-facing. Residues Asn46, Asn139, Asn177, and Asn225 are each glycosylated (N-linked (GlcNAc...) asparagine). The cysteines at positions 238 and 252 are disulfide-linked. Asn282 carries N-linked (GlcNAc...) asparagine glycosylation. Transmembrane regions (helical) follow at residues Val325–Met345, Met355–Pro375, and Val381–Val401. Topologically, residues Asn402 to Leu599 are cytoplasmic. Residues Leu600–Val620 form a helical membrane-spanning segment. Asn625 carries an N-linked (GlcNAc...) asparagine glycan.

Belongs to the ligand-gated ion channel (TC 1.A.9) family.

The protein localises to the postsynaptic cell membrane. It is found in the cell membrane. Its function is as follows. Possible acetylcholine receptor. This chain is Ligand-gated ion channel 4 (lgc-4), found in Caenorhabditis elegans.